The sequence spans 98 residues: Beta-elicitin DRE-beta (98 aa).

Cystine bridges form between Cys3–Cys71, Cys27–Cys56, and Cys51–Cys95.

Belongs to the elicitin family.

It localises to the secreted. Induces local and distal defense responses (incompatible hypersensitive reaction) in plants from the solanaceae and cruciferae families. Elicits leaf necrosis and causes the accumulation of pathogenesis-related proteins. Might interact with the lipidic molecules of the plasma membrane. This chain is Beta-elicitin DRE-beta, found in Phytophthora drechsleri.